Consider the following 109-residue polypeptide: Nucleoid-associated protein Psyc_0793 (109 aa).

The protein belongs to the YbaB/EbfC family. In terms of assembly, homodimer.

It localises to the cytoplasm. Its subcellular location is the nucleoid. Its function is as follows. Binds to DNA and alters its conformation. May be involved in regulation of gene expression, nucleoid organization and DNA protection. This chain is Nucleoid-associated protein Psyc_0793, found in Psychrobacter arcticus (strain DSM 17307 / VKM B-2377 / 273-4).